A 38-amino-acid polypeptide reads, in one-letter code: Photosystem II reaction center protein X 1 (38 aa).

Residues 8–28 (FLWSLLYGAVVLGLLFGAIVF) form a helical membrane-spanning segment.

The protein belongs to the PsbX family. Type 1 subfamily. As to quaternary structure, PSII is composed of 1 copy each of membrane proteins PsbA, PsbB, PsbC, PsbD, PsbE, PsbF, PsbH, PsbI, PsbJ, PsbK, PsbL, PsbM, PsbT, PsbX, PsbY, PsbZ, Psb30/Ycf12, peripheral proteins PsbO, CyanoQ (PsbQ), PsbU, PsbV and a large number of cofactors. It forms dimeric complexes.

It localises to the cellular thylakoid membrane. Functionally, involved in the binding and/or turnover of quinones at the Q(B) site of photosystem II (PSII). PSII is a light-driven water plastoquinone oxidoreductase, using light energy to abstract electrons from H(2)O, generating a proton gradient subsequently used for ATP formation. The protein is Photosystem II reaction center protein X 1 of Synechococcus sp. (strain JA-3-3Ab) (Cyanobacteria bacterium Yellowstone A-Prime).